The following is a 312-amino-acid chain: Olfactory receptor 10D3 (312 aa).

At 1-26 (MEIKNCSVVTEFILLGIPHTEGFETL) the chain is on the extracellular side. Asparagine 5 carries an N-linked (GlcNAc...) asparagine glycan. The chain crosses the membrane as a helical span at residues 27-47 (LFVLFLPFYACTLVGNVSILV). The Cytoplasmic portion of the chain corresponds to 48-57 (AVISSTRLHT). The chain crosses the membrane as a helical span at residues 58–78 (PMYFFLGNLSVFDMGFSSVTC). Topologically, residues 79–97 (PKMLFYLMGLSRLISYQDC) are extracellular. A disulfide bond links cysteine 97 and cysteine 179. Residues 98-118 (VSQLFFFHFLGSIECFLYTVM) traverse the membrane as a helical segment. Residues 119 to 139 (AYDRFAAICHPLRYSVIMNSK) are Cytoplasmic-facing. A helical membrane pass occupies residues 140-160 (ICVALAVGTWLLGCFHSSVLT). Topologically, residues 161-197 (SLTFTLPYCGPNEVDHFFCDIPAILPLASADTSLAQR) are extracellular. A helical transmembrane segment spans residues 198–218 (VSFTNVGLVSLVCFLLILLSY). The Cytoplasmic portion of the chain corresponds to 219–239 (TRITISILSIQSTEGRQRAFS). Residues 240 to 260 (TCSAHLIAILCAYGPIITIYL) traverse the membrane as a helical segment. Residues 261–266 (QPTPNP) lie on the Extracellular side of the membrane. A helical membrane pass occupies residues 267–287 (MLGTVVQILMNLVGPMLNPLI). Residues 288–312 (YTLRNKEVKIALKKILHGKGSVSEG) are Cytoplasmic-facing.

It belongs to the G-protein coupled receptor 1 family.

It localises to the cell membrane. Potential odorant receptor. The chain is Olfactory receptor 10D3 from Mus musculus (Mouse).